Consider the following 217-residue polypeptide: Probable transaldolase (217 aa).

The Schiff-base intermediate with substrate role is filled by Lys83.

This sequence belongs to the transaldolase family. Type 3B subfamily.

Its subcellular location is the cytoplasm. The catalysed reaction is D-sedoheptulose 7-phosphate + D-glyceraldehyde 3-phosphate = D-erythrose 4-phosphate + beta-D-fructose 6-phosphate. It functions in the pathway carbohydrate degradation; pentose phosphate pathway; D-glyceraldehyde 3-phosphate and beta-D-fructose 6-phosphate from D-ribose 5-phosphate and D-xylulose 5-phosphate (non-oxidative stage): step 2/3. Transaldolase is important for the balance of metabolites in the pentose-phosphate pathway. The protein is Probable transaldolase of Hydrogenobaculum sp. (strain Y04AAS1).